The sequence spans 433 residues: 3-phosphoshikimate 1-carboxyvinyltransferase (433 aa).

Lysine 22, serine 23, and arginine 27 together coordinate 3-phosphoshikimate. A phosphoenolpyruvate-binding site is contributed by lysine 22. Phosphoenolpyruvate contacts are provided by glycine 95 and arginine 123. Serine 167, glutamine 169, aspartate 315, and lysine 342 together coordinate 3-phosphoshikimate. Glutamine 169 is a phosphoenolpyruvate binding site. Residue aspartate 315 is the Proton acceptor of the active site. Arginine 346 and arginine 387 together coordinate phosphoenolpyruvate.

Belongs to the EPSP synthase family. In terms of assembly, monomer.

It is found in the cytoplasm. The enzyme catalyses 3-phosphoshikimate + phosphoenolpyruvate = 5-O-(1-carboxyvinyl)-3-phosphoshikimate + phosphate. It functions in the pathway metabolic intermediate biosynthesis; chorismate biosynthesis; chorismate from D-erythrose 4-phosphate and phosphoenolpyruvate: step 6/7. Its function is as follows. Catalyzes the transfer of the enolpyruvyl moiety of phosphoenolpyruvate (PEP) to the 5-hydroxyl of shikimate-3-phosphate (S3P) to produce enolpyruvyl shikimate-3-phosphate and inorganic phosphate. In Legionella pneumophila (strain Paris), this protein is 3-phosphoshikimate 1-carboxyvinyltransferase.